We begin with the raw amino-acid sequence, 368 residues long: Phospho-N-acetylmuramoyl-pentapeptide-transferase (368 aa).

A run of 10 helical transmembrane segments spans residues 32 to 52 (TGGA…WIID), 79 to 99 (TPTM…VLWA), 102 to 122 (LNPY…IGFY), 142 to 160 (LLLE…TRLG), 176 to 196 (VALD…VGAG), 207 to 227 (GLAI…AYLA), 244 to 264 (AGEL…FLWF), 271 to 291 (IFMG…IAVA), 296 to 316 (IVLA…IVQV), and 345 to 365 (QIVI…LSTL).

It belongs to the glycosyltransferase 4 family. MraY subfamily. Requires Mg(2+) as cofactor.

The protein resides in the cell inner membrane. It carries out the reaction UDP-N-acetyl-alpha-D-muramoyl-L-alanyl-gamma-D-glutamyl-meso-2,6-diaminopimeloyl-D-alanyl-D-alanine + di-trans,octa-cis-undecaprenyl phosphate = di-trans,octa-cis-undecaprenyl diphospho-N-acetyl-alpha-D-muramoyl-L-alanyl-D-glutamyl-meso-2,6-diaminopimeloyl-D-alanyl-D-alanine + UMP. It functions in the pathway cell wall biogenesis; peptidoglycan biosynthesis. In terms of biological role, catalyzes the initial step of the lipid cycle reactions in the biosynthesis of the cell wall peptidoglycan: transfers peptidoglycan precursor phospho-MurNAc-pentapeptide from UDP-MurNAc-pentapeptide onto the lipid carrier undecaprenyl phosphate, yielding undecaprenyl-pyrophosphoryl-MurNAc-pentapeptide, known as lipid I. This Nitrobacter winogradskyi (strain ATCC 25391 / DSM 10237 / CIP 104748 / NCIMB 11846 / Nb-255) protein is Phospho-N-acetylmuramoyl-pentapeptide-transferase.